Consider the following 354-residue polypeptide: Probable L-ascorbate-6-phosphate lactonase UlaG (354 aa).

Belongs to the UlaG family. It depends on a divalent metal cation as a cofactor.

It localises to the cytoplasm. It catalyses the reaction L-ascorbate 6-phosphate + H2O = 3-dehydro-L-gulonate 6-phosphate. Its pathway is cofactor degradation; L-ascorbate degradation; D-xylulose 5-phosphate from L-ascorbate: step 1/4. Probably catalyzes the hydrolysis of L-ascorbate-6-P into 3-keto-L-gulonate-6-P. Is essential for L-ascorbate utilization under anaerobic conditions. The polypeptide is Probable L-ascorbate-6-phosphate lactonase UlaG (Salmonella gallinarum (strain 287/91 / NCTC 13346)).